The following is a 1117-amino-acid chain: DNA-directed RNA polymerase subunit beta (1117 aa).

The segment at 1094 to 1117 (QLARRTPPRPTYESLSRESLDDDE) is disordered. Residues 1108-1117 (LSRESLDDDE) are compositionally biased toward basic and acidic residues.

It belongs to the RNA polymerase beta chain family. As to quaternary structure, in cyanobacteria the RNAP catalytic core is composed of 2 alpha, 1 beta, 1 beta', 1 gamma and 1 omega subunit. When a sigma factor is associated with the core the holoenzyme is formed, which can initiate transcription.

The catalysed reaction is RNA(n) + a ribonucleoside 5'-triphosphate = RNA(n+1) + diphosphate. DNA-dependent RNA polymerase catalyzes the transcription of DNA into RNA using the four ribonucleoside triphosphates as substrates. The sequence is that of DNA-directed RNA polymerase subunit beta from Trichormus variabilis (strain ATCC 29413 / PCC 7937) (Anabaena variabilis).